A 421-amino-acid chain; its full sequence is MIDPVLLREHPDVLRRSQEARGDSVQLVDEALQVDIERRAAITAFEELRAEQNAFGKRVAQAPKQEKKELVAQAQQLAGRVKEAQQVAAAAEARFESVLRKIGNPVVAGVPSGGEDDYAVLKEVGGIPAFGFEPRDHLALGELLGAIDMARGAKVSGARFSFLRGLGARLEIALMNLALDKALANGFVPLITPTLVKPEVMQGTGFLGEHSDEVYHLETDDLYLTGTSEVALAGYHADEILDVTEPLRYAGWSTCYRREAGSAGKDTRGIIRVHQFTKLEMFVYTLPEHAEAEHARLLAWQEEMMQALGLSYRVIDTAAGDLGSSAARKYDVEAWIPTQGRYRELTSTSNCGTFQARRLETRYRTESGKTAPVATLNGTLATTRWIVAILETHQREDGSVLVPETLRPYLGGLEILEPIGK.

227–229 (TSE) provides a ligand contact to L-serine. Residues 257–259 (RRE) and V273 contribute to the ATP site. E280 is an L-serine binding site. 344-347 (ELTS) serves as a coordination point for ATP. T379 is a binding site for L-serine.

This sequence belongs to the class-II aminoacyl-tRNA synthetase family. Type-1 seryl-tRNA synthetase subfamily. Homodimer. The tRNA molecule binds across the dimer.

The protein resides in the cytoplasm. The catalysed reaction is tRNA(Ser) + L-serine + ATP = L-seryl-tRNA(Ser) + AMP + diphosphate + H(+). The enzyme catalyses tRNA(Sec) + L-serine + ATP = L-seryl-tRNA(Sec) + AMP + diphosphate + H(+). It participates in aminoacyl-tRNA biosynthesis; selenocysteinyl-tRNA(Sec) biosynthesis; L-seryl-tRNA(Sec) from L-serine and tRNA(Sec): step 1/1. Its function is as follows. Catalyzes the attachment of serine to tRNA(Ser). Is also able to aminoacylate tRNA(Sec) with serine, to form the misacylated tRNA L-seryl-tRNA(Sec), which will be further converted into selenocysteinyl-tRNA(Sec). This Leifsonia xyli subsp. xyli (strain CTCB07) protein is Serine--tRNA ligase.